The primary structure comprises 539 residues: Eukaryotic translation initiation factor 3 subunit L (539 aa).

Positions Thr306 to His514 constitute a PCI domain.

This sequence belongs to the eIF-3 subunit L family. Component of the eukaryotic translation initiation factor 3 (eIF-3) complex. The eIF-3 complex interacts with pix.

It localises to the cytoplasm. Component of the eukaryotic translation initiation factor 3 (eIF-3) complex, which is involved in protein synthesis of a specialized repertoire of mRNAs and, together with other initiation factors, stimulates binding of mRNA and methionyl-tRNAi to the 40S ribosome. The eIF-3 complex specifically targets and initiates translation of a subset of mRNAs involved in cell proliferation. The protein is Eukaryotic translation initiation factor 3 subunit L of Drosophila ananassae (Fruit fly).